The chain runs to 564 residues: MHSYDYWLILAFFAVVLLPAPFLGRFYYKVMEGQSTWLTPILGPVERGCYRIAGVNPQDEQSWQKYTLALLAFNLAGFLLLFAILLFQDHLPLNPQNLPGQEWTLAFNTAVSFMTNTNWQAYSGEASLSYLSQMVGLTVQNFVSAATGLAVLVALCRGIGRKSTKTLGNFWVDMTRATLYGLLPLCLLLALYLVWQGVPQTFAQYVNAVTMQGVDQVIPLGPAASQIAIKQLGTNGGGFFGVNSAHPFENPTAWSNLFEVASIILIPVALVFTFGHYVKDLRQSRAIIGCMLALFIIGGATSLWAEYQPNPALNNVTVEQAAPLEGKEARFGTTATVLWSVTTTAASNGSVNGMHDSLNPLSGMVALVNMMVGEVIFGGVGAGLYGMLLNVLIAVFLAGLMIGRTPEYLGKKLQAREVQLLVVTLLVMPVGVLVLGAIAASLPGPVAAVSNPGPHGFSQLLYAYTSASANNGSAFGGFGANTAFHNLMLGLGMLIGRFGYILPVLALAGSLAMKKTAPIGQNSFPTHGPLFVTLLTVTILLLGGLTFLPTLALGPIAEHLSMGF.

The next 10 membrane-spanning stretches (helical) occupy residues 4–24 (YDYWLILAFFAVVLLPAPFLG), 67–87 (TLALLAFNLAGFLLLFAILLF), 135–155 (VGLTVQNFVSAATGLAVLVAL), 179–199 (LYGLLPLCLLLALYLVWQGVP), 258–278 (FEVASIILIPVALVFTFGHYV), 286–306 (AIIGCMLALFIIGGATSLWAE), 382–402 (AGLYGMLLNVLIAVFLAGLMI), 420–440 (LLVVTLLVMPVGVLVLGAIAA), 487–507 (LMLGLGMLIGRFGYILPVLAL), and 528–548 (GPLFVTLLTVTILLLGGLTFL).

It belongs to the KdpA family. As to quaternary structure, the system is composed of three essential subunits: KdpA, KdpB and KdpC.

It localises to the cell inner membrane. In terms of biological role, part of the high-affinity ATP-driven potassium transport (or Kdp) system, which catalyzes the hydrolysis of ATP coupled with the electrogenic transport of potassium into the cytoplasm. This subunit binds the periplasmic potassium ions and delivers the ions to the membrane domain of KdpB through an intramembrane tunnel. This is Potassium-transporting ATPase potassium-binding subunit from Pseudomonas fluorescens (strain Pf0-1).